A 529-amino-acid polypeptide reads, in one-letter code: Glucose-6-phosphate isomerase (529 aa).

The Proton donor role is filled by E323. Active-site residues include H352 and K456.

It belongs to the GPI family.

The protein resides in the cytoplasm. The catalysed reaction is alpha-D-glucose 6-phosphate = beta-D-fructose 6-phosphate. The protein operates within carbohydrate biosynthesis; gluconeogenesis. It participates in carbohydrate degradation; glycolysis; D-glyceraldehyde 3-phosphate and glycerone phosphate from D-glucose: step 2/4. In terms of biological role, catalyzes the reversible isomerization of glucose-6-phosphate to fructose-6-phosphate. The chain is Glucose-6-phosphate isomerase from Geobacter sulfurreducens (strain ATCC 51573 / DSM 12127 / PCA).